Reading from the N-terminus, the 508-residue chain is Maturase K (508 aa).

Belongs to the intron maturase 2 family. MatK subfamily.

It is found in the plastid. The protein localises to the chloroplast. Usually encoded in the trnK tRNA gene intron. Probably assists in splicing its own and other chloroplast group II introns. This Chaetosphaeridium globosum (Charophycean green alga) protein is Maturase K.